The sequence spans 223 residues: Thymidine kinase (223 aa).

Residues 19 to 26 (GPMFAGKT) and 96 to 99 (DEVQ) each bind ATP. Residue Glu97 is the Proton acceptor of the active site. Residues Cys153, Cys156, Cys191, and His194 each contribute to the Zn(2+) site.

This sequence belongs to the thymidine kinase family. As to quaternary structure, homotetramer.

Its subcellular location is the cytoplasm. It carries out the reaction thymidine + ATP = dTMP + ADP + H(+). The protein is Thymidine kinase of Ureaplasma urealyticum serovar 10 (strain ATCC 33699 / Western).